The following is a 534-amino-acid chain: CTP synthase (534 aa).

The tract at residues 1-267 (MTKYIFVTGG…DQIVCDHLKL (267 aa)) is amidoligase domain. Ser13 contributes to the CTP binding site. UTP is bound at residue Ser13. ATP is bound at residue 14-19 (SIGKGI). An L-glutamine-binding site is contributed by Tyr54. Asp71 contributes to the ATP binding site. Mg(2+) contacts are provided by Asp71 and Glu141. CTP-binding positions include 148–150 (DIE), 188–193 (KTKPTQ), and Lys224. UTP-binding positions include 188-193 (KTKPTQ) and Lys224. The Glutamine amidotransferase type-1 domain occupies 292 to 534 (KIALVGKYVE…FVTAAVENMK (243 aa)). Gly354 is an L-glutamine binding site. The active-site Nucleophile; for glutamine hydrolysis is the Cys381. Residues 382-385 (LGMQ), Glu405, and Arg463 contribute to the L-glutamine site. Active-site residues include His508 and Glu510.

This sequence belongs to the CTP synthase family. In terms of assembly, homotetramer.

It catalyses the reaction UTP + L-glutamine + ATP + H2O = CTP + L-glutamate + ADP + phosphate + 2 H(+). The catalysed reaction is L-glutamine + H2O = L-glutamate + NH4(+). The enzyme catalyses UTP + NH4(+) + ATP = CTP + ADP + phosphate + 2 H(+). Its pathway is pyrimidine metabolism; CTP biosynthesis via de novo pathway; CTP from UDP: step 2/2. Allosterically activated by GTP, when glutamine is the substrate; GTP has no effect on the reaction when ammonia is the substrate. The allosteric effector GTP functions by stabilizing the protein conformation that binds the tetrahedral intermediate(s) formed during glutamine hydrolysis. Inhibited by the product CTP, via allosteric rather than competitive inhibition. Catalyzes the ATP-dependent amination of UTP to CTP with either L-glutamine or ammonia as the source of nitrogen. Regulates intracellular CTP levels through interactions with the four ribonucleotide triphosphates. The chain is CTP synthase from Streptococcus agalactiae serotype Ia (strain ATCC 27591 / A909 / CDC SS700).